Consider the following 399-residue polypeptide: S-adenosylmethionine synthase (399 aa).

Histidine 15 serves as a coordination point for ATP. Aspartate 17 provides a ligand contact to Mg(2+). A K(+)-binding site is contributed by glutamate 43. L-methionine is bound by residues glutamate 56 and glutamine 99. The interval 99–109 (QSPDIARGVNR) is flexible loop. ATP contacts are provided by residues 166 to 168 (DAK), 232 to 233 (RF), aspartate 241, 247 to 248 (RK), alanine 264, and lysine 268. Aspartate 241 lines the L-methionine pocket. Lysine 272 contributes to the L-methionine binding site.

The protein belongs to the AdoMet synthase family. As to quaternary structure, homotetramer; dimer of dimers. Mg(2+) is required as a cofactor. Requires K(+) as cofactor.

The protein resides in the cytoplasm. It catalyses the reaction L-methionine + ATP + H2O = S-adenosyl-L-methionine + phosphate + diphosphate. It functions in the pathway amino-acid biosynthesis; S-adenosyl-L-methionine biosynthesis; S-adenosyl-L-methionine from L-methionine: step 1/1. Catalyzes the formation of S-adenosylmethionine (AdoMet) from methionine and ATP. The overall synthetic reaction is composed of two sequential steps, AdoMet formation and the subsequent tripolyphosphate hydrolysis which occurs prior to release of AdoMet from the enzyme. The chain is S-adenosylmethionine synthase from Nitrosospira multiformis (strain ATCC 25196 / NCIMB 11849 / C 71).